A 430-amino-acid polypeptide reads, in one-letter code: Adenylosuccinate synthetase (430 aa).

GTP contacts are provided by residues 12–18 and 40–42; these read GDEGKGK and GHT. Residue Asp-13 is the Proton acceptor of the active site. The Mg(2+) site is built by Asp-13 and Gly-40. IMP contacts are provided by residues 13–16, 38–41, Thr-128, Arg-142, Gln-223, Thr-238, and Arg-302; these read DEGK and NAGH. His-41 (proton donor) is an active-site residue. Residue 298 to 304 coordinates substrate; it reads TTTGRPR. GTP-binding positions include Arg-304, 330–332, and 412–414; these read LLD and SVG.

The protein belongs to the adenylosuccinate synthetase family. Homodimer. The cofactor is Mg(2+).

It is found in the cytoplasm. The enzyme catalyses IMP + L-aspartate + GTP = N(6)-(1,2-dicarboxyethyl)-AMP + GDP + phosphate + 2 H(+). It participates in purine metabolism; AMP biosynthesis via de novo pathway; AMP from IMP: step 1/2. Its function is as follows. Plays an important role in the de novo pathway of purine nucleotide biosynthesis. Catalyzes the first committed step in the biosynthesis of AMP from IMP. The protein is Adenylosuccinate synthetase of Listeria monocytogenes serovar 1/2a (strain ATCC BAA-679 / EGD-e).